The following is an 85-amino-acid chain: MSSGGLLLLLGLLTLCAELTPVSSRKRHPDCDKPPDTKICQTVVRAFYYKPSAKRCVQFRYGGCNGNGNHFKSDHLCRCECLEYR.

The first 24 residues, Met-1–Ser-24, serve as a signal peptide directing secretion. Positions Cys-31–Cys-81 constitute a BPTI/Kunitz inhibitor domain. 3 disulfides stabilise this stretch: Cys-31–Cys-81, Cys-40–Cys-64, and Cys-56–Cys-77.

This sequence belongs to the venom Kunitz-type family. Heterodimer; disulfide-linked. The A chains have phospholipase A2 activity and the B chains show homology with the basic protease inhibitors. Expressed by the venom gland.

It localises to the secreted. Its function is as follows. Beta-2-bungarotoxin is a presynaptic neurotoxin of the venom. The B chain is homologous to venom basic protease inhibitors but has no protease inhibitor activity and blocks voltage-gated potassium channels (Kv). The protein is Kunitz-type serine protease inhibitor homolog beta-bungarotoxin B2 chain of Bungarus multicinctus (Many-banded krait).